Consider the following 258-residue polypeptide: L-aspartate dehydrogenase 1 (258 aa).

Residues A121 and N181 each contribute to the NAD(+) site. H211 is a catalytic residue.

The protein belongs to the L-aspartate dehydrogenase family.

The catalysed reaction is L-aspartate + NADP(+) + H2O = oxaloacetate + NH4(+) + NADPH + H(+). It carries out the reaction L-aspartate + NAD(+) + H2O = oxaloacetate + NH4(+) + NADH + H(+). The protein operates within cofactor biosynthesis; NAD(+) biosynthesis; iminoaspartate from L-aspartate (dehydrogenase route): step 1/1. Functionally, specifically catalyzes the NAD or NADP-dependent dehydrogenation of L-aspartate to iminoaspartate. In Bordetella bronchiseptica (strain ATCC BAA-588 / NCTC 13252 / RB50) (Alcaligenes bronchisepticus), this protein is L-aspartate dehydrogenase 1.